The sequence spans 447 residues: Na(+)-translocating NADH-quinone reductase subunit A (447 aa).

This sequence belongs to the NqrA family. As to quaternary structure, composed of six subunits; NqrA, NqrB, NqrC, NqrD, NqrE and NqrF.

The enzyme catalyses a ubiquinone + n Na(+)(in) + NADH + H(+) = a ubiquinol + n Na(+)(out) + NAD(+). Its function is as follows. NQR complex catalyzes the reduction of ubiquinone-1 to ubiquinol by two successive reactions, coupled with the transport of Na(+) ions from the cytoplasm to the periplasm. NqrA to NqrE are probably involved in the second step, the conversion of ubisemiquinone to ubiquinol. In Hahella chejuensis (strain KCTC 2396), this protein is Na(+)-translocating NADH-quinone reductase subunit A.